Here is a 387-residue protein sequence, read N- to C-terminus: Chorismate synthase (387 aa).

2 residues coordinate NADP(+): R39 and R45. FMN is bound by residues 130–132 (RSS), 251–252 (NA), G295, 310–314 (KPIPT), and R336.

Belongs to the chorismate synthase family. As to quaternary structure, homotetramer. FMNH2 serves as cofactor.

It catalyses the reaction 5-O-(1-carboxyvinyl)-3-phosphoshikimate = chorismate + phosphate. It functions in the pathway metabolic intermediate biosynthesis; chorismate biosynthesis; chorismate from D-erythrose 4-phosphate and phosphoenolpyruvate: step 7/7. Functionally, catalyzes the anti-1,4-elimination of the C-3 phosphate and the C-6 proR hydrogen from 5-enolpyruvylshikimate-3-phosphate (EPSP) to yield chorismate, which is the branch point compound that serves as the starting substrate for the three terminal pathways of aromatic amino acid biosynthesis. This reaction introduces a second double bond into the aromatic ring system. This Exiguobacterium sp. (strain ATCC BAA-1283 / AT1b) protein is Chorismate synthase.